The chain runs to 322 residues: HPr kinase/phosphorylase (322 aa).

Active-site residues include H146 and K167. 161 to 168 (GDSGLGKS) lines the ATP pocket. Position 168 (S168) interacts with Mg(2+). D185 functions as the Proton acceptor; for phosphorylation activity. Proton donor; for dephosphorylation activity in the catalytic mechanism. Residues 209–218 (LEVRGLGLLD) are important for the catalytic mechanism of both phosphorylation and dephosphorylation. E210 contributes to the Mg(2+) binding site. Residue R250 is part of the active site. Residues 271–276 (QVAAGR) form an important for the catalytic mechanism of dephosphorylation region.

It belongs to the HPrK/P family. In terms of assembly, homohexamer. Mg(2+) serves as cofactor.

The enzyme catalyses [HPr protein]-L-serine + ATP = [HPr protein]-O-phospho-L-serine + ADP + H(+). It carries out the reaction [HPr protein]-O-phospho-L-serine + phosphate + H(+) = [HPr protein]-L-serine + diphosphate. Catalyzes the ATP- as well as the pyrophosphate-dependent phosphorylation of a specific serine residue in HPr, a phosphocarrier protein of the phosphoenolpyruvate-dependent sugar phosphotransferase system (PTS). HprK/P also catalyzes the pyrophosphate-producing, inorganic phosphate-dependent dephosphorylation (phosphorolysis) of seryl-phosphorylated HPr (P-Ser-HPr). This is HPr kinase/phosphorylase from Burkholderia ambifaria (strain ATCC BAA-244 / DSM 16087 / CCUG 44356 / LMG 19182 / AMMD) (Burkholderia cepacia (strain AMMD)).